The following is a 188-amino-acid chain: Elongation factor P (188 aa).

Position 34 is an N6-(3,6-diaminohexanoyl)-5-hydroxylysine (Lys34).

The protein belongs to the elongation factor P family. May be beta-lysylated on the epsilon-amino group of Lys-34 by the combined action of EpmA and EpmB, and then hydroxylated on the C5 position of the same residue by EpmC (if this protein is present). Lysylation is critical for the stimulatory effect of EF-P on peptide-bond formation. The lysylation moiety may extend toward the peptidyltransferase center and stabilize the terminal 3-CCA end of the tRNA. Hydroxylation of the C5 position on Lys-34 may allow additional potential stabilizing hydrogen-bond interactions with the P-tRNA.

The protein resides in the cytoplasm. It participates in protein biosynthesis; polypeptide chain elongation. Functionally, involved in peptide bond synthesis. Alleviates ribosome stalling that occurs when 3 or more consecutive Pro residues or the sequence PPG is present in a protein, possibly by augmenting the peptidyl transferase activity of the ribosome. Modification of Lys-34 is required for alleviation. The chain is Elongation factor P from Vibrio campbellii (strain ATCC BAA-1116).